A 539-amino-acid chain; its full sequence is Glutamyl-tRNA(Gln) amidotransferase subunit A, mitochondrial (539 aa).

Residues Lys94 and Ser181 each act as charge relay system in the active site. Ser205 serves as the catalytic Acyl-ester intermediate.

This sequence belongs to the amidase family. GatA subfamily. Subunit of the heterotrimeric GatCAB amidotransferase (AdT) complex, composed of A, B and C subunits.

Its subcellular location is the mitochondrion. It catalyses the reaction L-glutamyl-tRNA(Gln) + L-glutamine + ATP + H2O = L-glutaminyl-tRNA(Gln) + L-glutamate + ADP + phosphate + H(+). Allows the formation of correctly charged Gln-tRNA(Gln) through the transamidation of misacylated Glu-tRNA(Gln) in the mitochondria. The reaction takes place in the presence of glutamine and ATP through an activated gamma-phospho-Glu-tRNA(Gln). The polypeptide is Glutamyl-tRNA(Gln) amidotransferase subunit A, mitochondrial (Mycosarcoma maydis (Corn smut fungus)).